A 337-amino-acid polypeptide reads, in one-letter code: MNKQDFYFDLPSELIAQYPLANRSDSRLLIYNRQTEEYGHYQFREIADFLQPGDLLVMNDSKVIPARLYGHKATGGKVELLVERITGDFTFLAHIKASKSLKSNDLIYLDAGKRLEVLQRQDDLFLCKACENILDLLNDLGHIPLPPYIAREDESLDKERYQTVYAKCAGSVAAPTAGLHFDDAVLSSIRARGVNIAYVTLHVGAGTFRPVRCERIQDHKMHSEWFTVSPDLCTAVKAAKSMGNRVIAVGTTALRSLESAAMGGELIPCSRDTDIFIYPGYQFKVCDGLITNFHLPESTLVMLVSAFIGHQECMALYQEAIDKRYRFFSYGDASLLL.

Belongs to the QueA family. In terms of assembly, monomer.

It is found in the cytoplasm. The catalysed reaction is 7-aminomethyl-7-carbaguanosine(34) in tRNA + S-adenosyl-L-methionine = epoxyqueuosine(34) in tRNA + adenine + L-methionine + 2 H(+). It participates in tRNA modification; tRNA-queuosine biosynthesis. Its function is as follows. Transfers and isomerizes the ribose moiety from AdoMet to the 7-aminomethyl group of 7-deazaguanine (preQ1-tRNA) to give epoxyqueuosine (oQ-tRNA). This is S-adenosylmethionine:tRNA ribosyltransferase-isomerase from Legionella pneumophila subsp. pneumophila (strain Philadelphia 1 / ATCC 33152 / DSM 7513).